We begin with the raw amino-acid sequence, 320 residues long: Short-chain dehydrogenase TIC 32 B, chloroplastic (320 aa).

NADP(+) is bound by residues 40–46 (GGTSGIG), 92–93 (DL), N119, and T140. S174 is a substrate binding site. Y196 acts as the Proton acceptor in catalysis. An interaction with calmodulin region spans residues 301–317 (DTTLADKLWDFSIKLVD).

The protein belongs to the short-chain dehydrogenases/reductases (SDR) family. Part of the Tic complex.

The protein resides in the plastid. The protein localises to the chloroplast inner membrane. Involved in protein precursor import into chloroplasts. The protein is Short-chain dehydrogenase TIC 32 B, chloroplastic of Brassica napus (Rape).